Consider the following 101-residue polypeptide: Acylphosphatase-1 (101 aa).

Ser2 is modified (N-acetylserine). Ser2 carries the post-translational modification N-acetylalanine. Positions 11-101 (SVDYEVFGKV…LDYSDFQIVK (91 aa)) constitute an Acylphosphatase-like domain. Residues Arg26 and Asn44 contribute to the active site.

It belongs to the acylphosphatase family. In terms of tissue distribution, organ-common type isozyme is found in many different tissues.

It carries out the reaction an acyl phosphate + H2O = a carboxylate + phosphate + H(+). This is Acylphosphatase-1 (ACYP1) from Sus scrofa (Pig).